Reading from the N-terminus, the 550-residue chain is O-phosphoserine--tRNA(Cys) ligase (550 aa).

The tract at residues 1 to 32 (MRFNPQDWKEKSHTNFEGAWHDGPSVITPPGE) is disordered. Residues 212-214 (HMT), 257-259 (SAS), 299-300 (YY), and asparagine 342 each bind substrate.

Belongs to the class-II aminoacyl-tRNA synthetase family. O-phosphoseryl-tRNA(Cys) synthetase subfamily. Homotetramer. Interacts with SepCysS.

It catalyses the reaction tRNA(Cys) + O-phospho-L-serine + ATP = O-phospho-L-seryl-tRNA(Cys) + AMP + diphosphate. Functionally, catalyzes the attachment of O-phosphoserine (Sep) to tRNA(Cys). The sequence is that of O-phosphoserine--tRNA(Cys) ligase from Methanoregula boonei (strain DSM 21154 / JCM 14090 / 6A8).